Here is a 295-residue protein sequence, read N- to C-terminus: Protoheme IX farnesyltransferase (295 aa).

The next 9 helical transmembrane spans lie at 8–28 (VTKPGIIFGNLISVIGGFLLA), 35–55 (YPLFLSTLLGVSLVVASGCVF), 74–94 (VLVKGLIDPKVSLIYASVLGI), 98–118 (LLLYVAANALAMMLAVIGFVI), 132–152 (VYGTLIGSLSGAAPPVIGYCA), 162–182 (LILLLIFSLWQMPHSYAIAIF), 208–228 (ITLYILAFMVATLMLTLSGYA), 233–253 (LVVAAAVSVWWLGMALRGYKA), and 264–284 (FVFSIIAITSLSVMMSVDFNV).

This sequence belongs to the UbiA prenyltransferase family. Protoheme IX farnesyltransferase subfamily.

Its subcellular location is the cell inner membrane. It carries out the reaction heme b + (2E,6E)-farnesyl diphosphate + H2O = Fe(II)-heme o + diphosphate. Its pathway is porphyrin-containing compound metabolism; heme O biosynthesis; heme O from protoheme: step 1/1. Converts heme B (protoheme IX) to heme O by substitution of the vinyl group on carbon 2 of heme B porphyrin ring with a hydroxyethyl farnesyl side group. The protein is Protoheme IX farnesyltransferase of Yersinia pseudotuberculosis serotype O:1b (strain IP 31758).